The following is a 345-amino-acid chain: N-acetyl-gamma-glutamyl-phosphate reductase (345 aa).

Cys153 is an active-site residue.

Belongs to the NAGSA dehydrogenase family. Type 1 subfamily.

Its subcellular location is the cytoplasm. It carries out the reaction N-acetyl-L-glutamate 5-semialdehyde + phosphate + NADP(+) = N-acetyl-L-glutamyl 5-phosphate + NADPH + H(+). It functions in the pathway amino-acid biosynthesis; L-arginine biosynthesis; N(2)-acetyl-L-ornithine from L-glutamate: step 3/4. In terms of biological role, catalyzes the NADPH-dependent reduction of N-acetyl-5-glutamyl phosphate to yield N-acetyl-L-glutamate 5-semialdehyde. This chain is N-acetyl-gamma-glutamyl-phosphate reductase, found in Methylacidiphilum infernorum (isolate V4) (Methylokorus infernorum (strain V4)).